Reading from the N-terminus, the 121-residue chain is Protein PilH (121 aa).

Positions 3–119 constitute a Response regulatory domain; that stretch reads RILIVDDSPT…TLLKTINAVL (117 aa). At aspartate 52 the chain carries 4-aspartylphosphate.

May be a part of a signal-transduction system that regulates twitching motility by controlling pilus function (extension and retraction). This Pseudomonas aeruginosa (strain ATCC 15692 / DSM 22644 / CIP 104116 / JCM 14847 / LMG 12228 / 1C / PRS 101 / PAO1) protein is Protein PilH (pilH).